The primary structure comprises 236 residues: Chloride intracellular channel protein 3 (236 aa).

The interval 1–88 is required for insertion into the membrane; sequence MAETKLQLFV…EDFLEETLGP (88 aa). One can recognise a GST N-terminal domain in the interval 12–90; that stretch reads ASEDGESVGH…FLEETLGPPD (79 aa). A G-site motif is present at residues 22–25; that stretch reads CPSC. Cys-22 and Cys-25 are joined by a disulfide. The helical transmembrane segment at 24–44 threads the bilayer; that stretch reads SCQRLFMVLLLKGVPFTLTTV. Phosphoserine occurs at positions 49 and 159. Residues 68–235 enclose the GST C-terminal domain; sequence DSDAKTDTLQ…LAAYRPAVHP (168 aa).

It belongs to the chloride channel CLIC family. Associated with the C-terminal of MAPK15. As to expression, detected in placenta (at protein level). Widely expressed. High expression is found in placenta followed by lung and heart. Low expression in skeletal muscle, kidney and pancreas.

The protein localises to the nucleus. The protein resides in the membrane. Its subcellular location is the cell membrane. It is found in the cytoplasm. It localises to the secreted. The protein localises to the extracellular space. The protein resides in the extracellular matrix. It carries out the reaction chloride(in) = chloride(out). Inhibited by rapamycin, amphotericin B and IAA-94. Its function is as follows. In the soluble state, catalyzes glutaredoxin-like thiol disulfide exchange reactions with reduced glutathione as electron donor. Reduced in a glutathione-dependent way and secreted into the extracellular matrix where it activates TGM2 and promotes blood vessel growth during tissue remodeling as occurs in tumorigenesis. Can reduce specific cysteines in TGM2 and regulate cofactor binding. Can insert into membranes and form outwardly rectifying chloride ion channels. May participate in cellular growth control. This is Chloride intracellular channel protein 3 from Homo sapiens (Human).